The following is a 234-amino-acid chain: LexA repressor (234 aa).

A DNA-binding region (H-T-H motif) is located at residues 26-46; sequence FEEMKEALDLKSKSGVHRLIS. The tract at residues 73 to 100 is disordered; the sequence is AVGKAAPVSQREAANTNSALPPLRAAPK. A compositionally biased stretch (low complexity) spans 91 to 100; that stretch reads ALPPLRAAPK. Residues Ser-154 and Lys-192 each act as for autocatalytic cleavage activity in the active site.

Belongs to the peptidase S24 family. Homodimer.

It catalyses the reaction Hydrolysis of Ala-|-Gly bond in repressor LexA.. In terms of biological role, represses a number of genes involved in the response to DNA damage (SOS response), including recA and lexA. In the presence of single-stranded DNA, RecA interacts with LexA causing an autocatalytic cleavage which disrupts the DNA-binding part of LexA, leading to derepression of the SOS regulon and eventually DNA repair. The protein is LexA repressor of Novosphingobium aromaticivorans (strain ATCC 700278 / DSM 12444 / CCUG 56034 / CIP 105152 / NBRC 16084 / F199).